The primary structure comprises 293 residues: Glutamyl-Q tRNA(Asp) synthetase (293 aa).

L-glutamate is bound by residues 26–30 (RYAPS) and D62. A 'HIGH' region motif is present at residues 29-39 (PSPTGALHLGN). Zn(2+) is bound by residues C118, C120, Y131, and C135. L-glutamate contacts are provided by Y178 and R196. The 'KMSKS' region signature appears at 234 to 238 (KLSKR). K237 serves as a coordination point for ATP.

The protein belongs to the class-I aminoacyl-tRNA synthetase family. GluQ subfamily. It depends on Zn(2+) as a cofactor.

Its function is as follows. Catalyzes the tRNA-independent activation of glutamate in presence of ATP and the subsequent transfer of glutamate onto a tRNA(Asp). Glutamate is transferred on the 2-amino-5-(4,5-dihydroxy-2-cyclopenten-1-yl) moiety of the queuosine in the wobble position of the QUC anticodon. The polypeptide is Glutamyl-Q tRNA(Asp) synthetase (Parasynechococcus marenigrum (strain WH8102)).